A 596-amino-acid chain; its full sequence is MNTAIQAALDHAVQTLQQEGVLPSDWNNSSNLTRTKDRSHGDFASNIAMIGSKAAGMKPRDLAEKILAALPEVADISKAEIAGPGFINFFLNADQRFAILDQIQAQKESFGRSQSNVAKKIQVEFVSANPTSSLHVGHGRGAAYGMTVANLLEATGAKVDREYYVNDAGRQMDILATSTYLRYLELLGQNLVFPKNAYQGDYVKEIAQGIIDKDGDAYVREVANVYKDVPEDVQYAEELDSEGNKVVLSGDKEKHIDGLIANSQQLLGEGYRVFHQAALHAILDDIKDDLADFGVTFNQWFSEASLSAKIDEALETLDQRGFLYEKDGNIWFKSTEFGDEKDRVVKRRNGQTTYFASDIAYHLNKLQRGYTDLVDIWGSDHHGYISRVKAAIDAMGYDSKKLTVLLVQFVSLWRGGEMVQMSSRSGQFVTLRDLRKEVGNDAARFYYVMRKSEQHIDFDLDLAVSQSKDNAVYYIQYAHARICRMLEKAASTGLQFEVSAARSHAARLSLDAETEILAKLAAYPDVVLRAANAYEPHQVGNYLKELAALFHGWYNEHKVLSDDAELTQARLLLSINVQQVLRNGLELLGVSAPEAM.

A 'HIGH' region motif is present at residues 128 to 138 (ANPTSSLHVGH).

Belongs to the class-I aminoacyl-tRNA synthetase family. In terms of assembly, monomer.

It localises to the cytoplasm. The catalysed reaction is tRNA(Arg) + L-arginine + ATP = L-arginyl-tRNA(Arg) + AMP + diphosphate. This chain is Arginine--tRNA ligase, found in Acinetobacter baumannii (strain SDF).